The primary structure comprises 206 residues: MARYIGPKCKLARREGTDLFLKSGVRAIESKCNIEAAPGIHGQRRGRQSDYGTQLREKQKVRRIYGVLERQFSGYYKEAAGKKGATGENLLQLLECRLDNVVYRMGFGSTRAESRQLVSHKSISVNGQTVNVPSYQVRAGDVVAVREKAKNQLRIVQALDLCAQRGRVEWVEVDTEKKSGVFKNVPARSDLSADINESLIVELYSK.

Positions 96-156 (CRLDNVVYRM…EKAKNQLRIV (61 aa)) constitute an S4 RNA-binding domain.

The protein belongs to the universal ribosomal protein uS4 family. In terms of assembly, part of the 30S ribosomal subunit. Contacts protein S5. The interaction surface between S4 and S5 is involved in control of translational fidelity.

In terms of biological role, one of the primary rRNA binding proteins, it binds directly to 16S rRNA where it nucleates assembly of the body of the 30S subunit. Functionally, with S5 and S12 plays an important role in translational accuracy. The protein is Small ribosomal subunit protein uS4 of Pseudomonas fluorescens (strain SBW25).